A 483-amino-acid chain; its full sequence is Rhamnulokinase (483 aa).

Residue 11-15 (ASSGR) coordinates ATP. Residues Gly79 and 234–236 (HDT) each bind substrate. Asp235 functions as the Proton acceptor in the catalytic mechanism. Position 257 (Thr257) interacts with ATP. Asn294 is a binding site for substrate. Position 302 (Gln302) interacts with ATP. Cys352 and Cys369 are disulfide-bonded. Gly401 is an ATP binding site.

It belongs to the rhamnulokinase family. Requires Mg(2+) as cofactor.

The enzyme catalyses L-rhamnulose + ATP = L-rhamnulose 1-phosphate + ADP + H(+). The protein operates within carbohydrate degradation; L-rhamnose degradation; glycerone phosphate from L-rhamnose: step 2/3. In terms of biological role, involved in the catabolism of L-rhamnose (6-deoxy-L-mannose). Catalyzes the transfer of the gamma-phosphate group from ATP to the 1-hydroxyl group of L-rhamnulose to yield L-rhamnulose 1-phosphate. The polypeptide is Rhamnulokinase (Listeria monocytogenes serotype 4b (strain F2365)).